A 341-amino-acid polypeptide reads, in one-letter code: UDP-3-O-(3-hydroxymyristoyl)glucosamine N-acyltransferase (341 aa).

His239 (proton acceptor) is an active-site residue.

It belongs to the transferase hexapeptide repeat family. LpxD subfamily. As to quaternary structure, homotrimer.

It catalyses the reaction a UDP-3-O-[(3R)-3-hydroxyacyl]-alpha-D-glucosamine + a (3R)-hydroxyacyl-[ACP] = a UDP-2-N,3-O-bis[(3R)-3-hydroxyacyl]-alpha-D-glucosamine + holo-[ACP] + H(+). It carries out the reaction UDP-3-O-[(3R)-3-hydroxytetradecanoyl]-alpha-D-glucosamine + (3R)-hydroxytetradecanoyl-[ACP] = UDP-2-N,3-O-bis[(3R)-3-hydroxytetradecanoyl]-alpha-D-glucosamine + holo-[ACP] + H(+). It participates in glycolipid biosynthesis; lipid IV(A) biosynthesis; lipid IV(A) from (3R)-3-hydroxytetradecanoyl-[acyl-carrier-protein] and UDP-N-acetyl-alpha-D-glucosamine: step 3/6. Its function is as follows. Catalyzes the N-acylation of UDP-3-O-(hydroxytetradecanoyl)glucosamine using 3-hydroxytetradecanoyl-ACP as the acyl donor. Is involved in the biosynthesis of lipid A, a phosphorylated glycolipid that anchors the lipopolysaccharide to the outer membrane of the cell. This chain is UDP-3-O-(3-hydroxymyristoyl)glucosamine N-acyltransferase, found in Escherichia coli O157:H7.